Here is a 245-residue protein sequence, read N- to C-terminus: tRNA1(Val) (adenine(37)-N6)-methyltransferase (245 aa).

It belongs to the methyltransferase superfamily. tRNA (adenine-N(6)-)-methyltransferase family.

It localises to the cytoplasm. The catalysed reaction is adenosine(37) in tRNA1(Val) + S-adenosyl-L-methionine = N(6)-methyladenosine(37) in tRNA1(Val) + S-adenosyl-L-homocysteine + H(+). Its function is as follows. Specifically methylates the adenine in position 37 of tRNA(1)(Val) (anticodon cmo5UAC). The chain is tRNA1(Val) (adenine(37)-N6)-methyltransferase from Escherichia coli O139:H28 (strain E24377A / ETEC).